The sequence spans 286 residues: 33 kDa chaperonin (286 aa).

Disulfide bonds link Cys225–Cys227 and Cys258–Cys261.

This sequence belongs to the HSP33 family. In terms of processing, under oxidizing conditions two disulfide bonds are formed involving the reactive cysteines. Under reducing conditions zinc is bound to the reactive cysteines and the protein is inactive.

It localises to the cytoplasm. In terms of biological role, redox regulated molecular chaperone. Protects both thermally unfolding and oxidatively damaged proteins from irreversible aggregation. Plays an important role in the bacterial defense system toward oxidative stress. This chain is 33 kDa chaperonin, found in Shewanella sediminis (strain HAW-EB3).